The primary structure comprises 503 residues: Cytochrome P450 3A43 (503 aa).

Residue C442 coordinates heme.

The protein belongs to the cytochrome P450 family. Heme serves as cofactor. As to expression, highest expression level in prostate. Also expressed in liver, kidney, pancreas, fetal liver and fetal skeletal muscle.

The protein localises to the endoplasmic reticulum membrane. It localises to the microsome membrane. It catalyses the reaction an organic molecule + reduced [NADPH--hemoprotein reductase] + O2 = an alcohol + oxidized [NADPH--hemoprotein reductase] + H2O + H(+). Functionally, exhibits low testosterone 6-beta-hydroxylase activity. The protein is Cytochrome P450 3A43 (CYP3A43) of Homo sapiens (Human).